Here is a 270-residue protein sequence, read N- to C-terminus: 4-hydroxy-tetrahydrodipicolinate reductase (270 aa).

NAD(+)-binding positions include 9-14 and Glu-35; that span reads GAGGRM. Residue Arg-36 coordinates NADP(+). NAD(+) is bound by residues 99–101 and 123–126; these read GTT and ASNF. The active-site Proton donor/acceptor is His-156. His-157 is a (S)-2,3,4,5-tetrahydrodipicolinate binding site. Lys-160 (proton donor) is an active-site residue. 166–167 serves as a coordination point for (S)-2,3,4,5-tetrahydrodipicolinate; sequence GT.

This sequence belongs to the DapB family.

Its subcellular location is the cytoplasm. The enzyme catalyses (S)-2,3,4,5-tetrahydrodipicolinate + NAD(+) + H2O = (2S,4S)-4-hydroxy-2,3,4,5-tetrahydrodipicolinate + NADH + H(+). It catalyses the reaction (S)-2,3,4,5-tetrahydrodipicolinate + NADP(+) + H2O = (2S,4S)-4-hydroxy-2,3,4,5-tetrahydrodipicolinate + NADPH + H(+). Its pathway is amino-acid biosynthesis; L-lysine biosynthesis via DAP pathway; (S)-tetrahydrodipicolinate from L-aspartate: step 4/4. Its function is as follows. Catalyzes the conversion of 4-hydroxy-tetrahydrodipicolinate (HTPA) to tetrahydrodipicolinate. The chain is 4-hydroxy-tetrahydrodipicolinate reductase from Haemophilus influenzae (strain PittEE).